A 558-amino-acid chain; its full sequence is Atlastin-1 (558 aa).

A disordered region spans residues 1 to 27 (MAKNRRDRNSWGGFSEKTYEWSSEEEE). The N-terminal hypervariable region (HVR) stretch occupies residues 1–34 (MAKNRRDRNSWGGFSEKTYEWSSEEEEPVKKAGP). Topologically, residues 1–449 (MAKNRRDRNS…NIFHAARTPA (449 aa)) are cytoplasmic. A phosphoserine mark is found at S10, S22, and S23. The 246-residue stretch at 64 to 309 (DKEVVAVSVA…LIPWLLSPES (246 aa)) folds into the GB1/RHD3-type G domain. 11 residues coordinate GDP: R77, K78, G79, K80, S81, F82, Q148, R217, D218, V276, and N279. Residues R77, K78, G79, K80, S81, and F82 each contribute to the GTP site. S81 provides a ligand contact to Mg(2+). Positions 217, 218, and 276 each coordinate GTP. The 3HB (three-helix bundle) domain stretch occupies residues 347–438 (MLQATAEANN…YIQYIKHNDS (92 aa)). Position 395 is an N6-acetyllysine (K395). Residues 412–439 (EFSRRYLQQLESEIDELYIQYIKHNDSK) are a coiled coil. The segment at 439–447 (KNIFHAART) is linker. A helical membrane pass occupies residues 450 to 470 (TLFVVIFITYVIAGVTGFIGL). Residue D471 is a topological domain, lumenal. A helical membrane pass occupies residues 472 to 492 (IIASLCNMIMGLTLITLCTWA). Over 493–558 (YIRYSGEYRE…STEQSEKKKM (66 aa)) the chain is Cytoplasmic. Positions 521–558 (NEALYKLYSAAATHRHLYHQAFPTPKSESTEQSEKKKM) are autoinhibitory domain.

The protein belongs to the TRAFAC class dynamin-like GTPase superfamily. GB1/RHD3 GTPase family. GB1 subfamily. As to quaternary structure, monomeric and homodimeric. The homodimer, transiently formed by two molecules on opposing membranes, is the active form mediating ER membrane fusion. Interacts with REEP1, REEP5, RTN3 and RTN4 (via the transmembrane region); these proteins are involved in endoplasmic reticulum tubular network organization. Interacts with ZFYVE27; both proteins are involved in endoplasmic reticulum tubular network organization. Interacts with ARL6IP1; both proteins are involved in endoplasmic reticulum tubular network organization. Interacts with SPAST; the interaction is direct, could recruit SPAST to Golgi membranes. Interacts (via N-terminal region) with MAP4K4 (via CNH regulatory domain). May interact with TMED2. Interacts with CPT1C. In terms of processing, phosphorylated. Phosphorylation, by different kinases, of the N-terminal hypervariable region (HVR) regulates the ATL1-mediated membrane tethering step.

It is found in the endoplasmic reticulum membrane. The protein localises to the golgi apparatus membrane. Its subcellular location is the cell projection. The protein resides in the axon. It carries out the reaction GTP + H2O = GDP + phosphate + H(+). Atlastin-1 (ATL1) is a membrane-anchored GTPase that mediates the GTP-dependent fusion of endoplasmic reticulum (ER) membranes, maintaining the continuous ER network. It facilitates the formation of three-way junctions where ER tubules intersect. Two atlastin-1 on neighboring ER tubules bind GTP and form loose homodimers through the GB1/RHD3-type G domains and 3HB regions. Upon GTP hydrolysis, the 3HB regions tighten, pulling the membranes together to drive their fusion. After fusion, the homodimer disassembles upon release of inorganic phosphate (Pi). Subsequently, GDP dissociates, resetting the monomers to a conformation ready for a new fusion cycle. May also regulate more or less directly Golgi biogenesis. Indirectly regulates axonal development. The protein is Atlastin-1 of Macaca fascicularis (Crab-eating macaque).